The primary structure comprises 165 residues: Large ribosomal subunit protein uL10 (165 aa).

This sequence belongs to the universal ribosomal protein uL10 family. As to quaternary structure, part of the ribosomal stalk of the 50S ribosomal subunit. The N-terminus interacts with L11 and the large rRNA to form the base of the stalk. The C-terminus forms an elongated spine to which L12 dimers bind in a sequential fashion forming a multimeric L10(L12)X complex.

Functionally, forms part of the ribosomal stalk, playing a central role in the interaction of the ribosome with GTP-bound translation factors. This is Large ribosomal subunit protein uL10 from Burkholderia cenocepacia (strain HI2424).